Reading from the N-terminus, the 234-residue chain is Phosphoglycolate phosphatase (234 aa).

Aspartate 8 serves as the catalytic Nucleophile. Mg(2+)-binding residues include aspartate 8 and aspartate 10. Lysine 155 contacts substrate. Mg(2+) is bound by residues aspartate 178 and aspartate 182.

Belongs to the archaeal SPP-like hydrolase family. Mg(2+) serves as cofactor.

The catalysed reaction is 2-phosphoglycolate + H2O = glycolate + phosphate. Its function is as follows. Catalyzes the dephosphorylation of 2-phosphoglycolate. This is Phosphoglycolate phosphatase from Thermococcus sibiricus (strain DSM 12597 / MM 739).